The primary structure comprises 238 residues: tRNA (guanine-N(7)-)-methyltransferase (238 aa).

Positions 68, 93, 120, and 143 each coordinate S-adenosyl-L-methionine. The active site involves D143. Residues K147, D179, and 216 to 219 each bind substrate; that span reads TKFE.

Belongs to the class I-like SAM-binding methyltransferase superfamily. TrmB family.

The catalysed reaction is guanosine(46) in tRNA + S-adenosyl-L-methionine = N(7)-methylguanosine(46) in tRNA + S-adenosyl-L-homocysteine. It functions in the pathway tRNA modification; N(7)-methylguanine-tRNA biosynthesis. Its function is as follows. Catalyzes the formation of N(7)-methylguanine at position 46 (m7G46) in tRNA. The chain is tRNA (guanine-N(7)-)-methyltransferase from Shewanella denitrificans (strain OS217 / ATCC BAA-1090 / DSM 15013).